The chain runs to 187 residues: Peptidyl-tRNA hydrolase (187 aa).

A tRNA-binding site is contributed by Y15. H20 (proton acceptor) is an active-site residue. TRNA contacts are provided by Y64, N66, and N112.

It belongs to the PTH family. Monomer.

The protein resides in the cytoplasm. The catalysed reaction is an N-acyl-L-alpha-aminoacyl-tRNA + H2O = an N-acyl-L-amino acid + a tRNA + H(+). Hydrolyzes ribosome-free peptidyl-tRNAs (with 1 or more amino acids incorporated), which drop off the ribosome during protein synthesis, or as a result of ribosome stalling. Its function is as follows. Catalyzes the release of premature peptidyl moieties from peptidyl-tRNA molecules trapped in stalled 50S ribosomal subunits, and thus maintains levels of free tRNAs and 50S ribosomes. In Phocaeicola vulgatus (strain ATCC 8482 / DSM 1447 / JCM 5826 / CCUG 4940 / NBRC 14291 / NCTC 11154) (Bacteroides vulgatus), this protein is Peptidyl-tRNA hydrolase.